Consider the following 168-residue polypeptide: MSRYRPPRTAGTPLITPEGAARLRAELHELWHVRRPQVTQAVSEAAALGDRSENAEYIYGKKMLREIDSRVRFLRKRLENLKVVGERPADPNRVYFGAWVTLEDEDGEQARYRIVGPDELDLRNNQISIDSPLARALVGKELDAEVLVRTPAGEKLWFVVEIEYPPAP.

Positions 61–84 (KKMLREIDSRVRFLRKRLENLKVV) form a coiled coil.

It belongs to the GreA/GreB family. GreB subfamily.

Functionally, necessary for efficient RNA polymerase transcription elongation past template-encoded arresting sites. The arresting sites in DNA have the property of trapping a certain fraction of elongating RNA polymerases that pass through, resulting in locked ternary complexes. Cleavage of the nascent transcript by cleavage factors such as GreA or GreB allows the resumption of elongation from the new 3'terminus. GreB releases sequences of up to 9 nucleotides in length. The polypeptide is Transcription elongation factor GreB (Pseudomonas aeruginosa (strain ATCC 15692 / DSM 22644 / CIP 104116 / JCM 14847 / LMG 12228 / 1C / PRS 101 / PAO1)).